We begin with the raw amino-acid sequence, 360 residues long: MLVWLAEHLVKYYSGFNVFSYLTFRAIVSLLTALFISLWMGPRMIARLQKLSFGQVVRNDGPESHFSKRGTPTMGGIMILTAIVISVLLWAYPSNPYVWCVLVVLIGYGIIGFVDDYHKVVRKDTKGLIARWKYFWMSVIALGVAFALYLVGKDTPATQLVVPFFKDVMPQLGLFYILLSYFVIVGTGNAVNLTDGLDGLAIMPTVFVAAGFALVAWATGNMNFANYLHIPYLRYAGELVIVCTAIVGAGLGFLWFNTYPAQVFMGDVGSLALGGALGIIAVLLRQEFLLVIMGGVFVVETLSVILQVGSFKLRGQRIFRMAPIHHHYELKGWPEPRVIVRFWIISLMLVLIGLATLKVR.

Residues 1 to 25 lie on the Periplasmic side of the membrane; the sequence is MLVWLAEHLVKYYSGFNVFSYLTFR. A helical transmembrane segment spans residues 26–46; the sequence is AIVSLLTALFISLWMGPRMIA. Residues 47–71 are Cytoplasmic-facing; that stretch reads RLQKLSFGQVVRNDGPESHFSKRGT. A helical transmembrane segment spans residues 72-92; the sequence is PTMGGIMILTAIVISVLLWAY. A topological domain (periplasmic) is located at residue Pro93. The chain crosses the membrane as a helical span at residues 94-114; sequence SNPYVWCVLVVLIGYGIIGFV. The Cytoplasmic segment spans residues 115–131; sequence DDYHKVVRKDTKGLIAR. A helical transmembrane segment spans residues 132 to 152; that stretch reads WKYFWMSVIALGVAFALYLVG. Over 153–167 the chain is Periplasmic; that stretch reads KDTPATQLVVPFFKD. Residues 168–188 form a helical membrane-spanning segment; it reads VMPQLGLFYILLSYFVIVGTG. Topologically, residues 189–198 are cytoplasmic; sequence NAVNLTDGLD. The chain crosses the membrane as a helical span at residues 199 to 219; the sequence is GLAIMPTVFVAAGFALVAWAT. Over 220 to 235 the chain is Periplasmic; sequence GNMNFANYLHIPYLRY. Residues 236-256 traverse the membrane as a helical segment; sequence AGELVIVCTAIVGAGLGFLWF. At 257-262 the chain is on the cytoplasmic side; the sequence is NTYPAQ. A helical membrane pass occupies residues 263-283; it reads VFMGDVGSLALGGALGIIAVL. The Periplasmic segment spans residues 284-287; that stretch reads LRQE. A helical membrane pass occupies residues 288–308; the sequence is FLLVIMGGVFVVETLSVILQV. Residues 309–337 are Cytoplasmic-facing; it reads GSFKLRGQRIFRMAPIHHHYELKGWPEPR. The helical transmembrane segment at 338 to 358 threads the bilayer; the sequence is VIVRFWIISLMLVLIGLATLK. Over 359–360 the chain is Periplasmic; the sequence is VR.

Belongs to the glycosyltransferase 4 family. MraY subfamily. Mg(2+) serves as cofactor.

The protein localises to the cell inner membrane. The enzyme catalyses UDP-N-acetyl-alpha-D-muramoyl-L-alanyl-gamma-D-glutamyl-meso-2,6-diaminopimeloyl-D-alanyl-D-alanine + di-trans,octa-cis-undecaprenyl phosphate = di-trans,octa-cis-undecaprenyl diphospho-N-acetyl-alpha-D-muramoyl-L-alanyl-D-glutamyl-meso-2,6-diaminopimeloyl-D-alanyl-D-alanine + UMP. It functions in the pathway cell wall biogenesis; peptidoglycan biosynthesis. Its function is as follows. Catalyzes the initial step of the lipid cycle reactions in the biosynthesis of the cell wall peptidoglycan: transfers peptidoglycan precursor phospho-MurNAc-pentapeptide from UDP-MurNAc-pentapeptide onto the lipid carrier undecaprenyl phosphate, yielding undecaprenyl-pyrophosphoryl-MurNAc-pentapeptide, known as lipid I. The protein is Phospho-N-acetylmuramoyl-pentapeptide-transferase of Salmonella paratyphi A (strain ATCC 9150 / SARB42).